Here is a 109-residue protein sequence, read N- to C-terminus: UPF0060 membrane protein PA3275 (109 aa).

4 helical membrane passes run 5–25 (FWFV…YLWL), 27–47 (LGKS…FALL), 59–79 (AYAA…AFVE), and 84–104 (LWSD…VLFG).

Belongs to the UPF0060 family.

The protein resides in the cell inner membrane. The chain is UPF0060 membrane protein PA3275 from Pseudomonas aeruginosa (strain ATCC 15692 / DSM 22644 / CIP 104116 / JCM 14847 / LMG 12228 / 1C / PRS 101 / PAO1).